A 274-amino-acid chain; its full sequence is MVVRIYNPCTPGTRHRSVNDFSGVANSKYRKNLSFFLHRSKGRNNRGVITNRNLGGGHKRLFRKIEFKRDKFSIFGKVLSIEYDPNRSSRIALVIYSDGIKRYIIQPLNLVIGNKIISDFHTTIDIGNALPVNFIPLGTLVHNVEFKPGNGGKIARAAGAFSKIIAKDKNFVSLSMPSGETRLIENSCWATIGQVGNLDFYNVILGKAGRNRWLGNNPSVRGIAMNPCDHPHGGGEGRSPIGRSKPLTPWGKIALGKRTRKPKRYSNKYILSRK.

Positions 230–252 are disordered; the sequence is HPHGGGEGRSPIGRSKPLTPWGK.

Belongs to the universal ribosomal protein uL2 family. Part of the 50S ribosomal subunit.

The protein resides in the plastid. This is Large ribosomal subunit protein uL2c (rpl2) from Euglena longa (Euglenophycean alga).